The chain runs to 255 residues: Uracil-DNA glycosylase (255 aa).

A disordered region spans residues 1 to 20 (MFSASTTPEQPLGLSGDATP). The Proton acceptor role is filled by aspartate 99.

The protein belongs to the uracil-DNA glycosylase (UDG) superfamily. UNG family.

It is found in the host nucleus. It catalyses the reaction Hydrolyzes single-stranded DNA or mismatched double-stranded DNA and polynucleotides, releasing free uracil.. In terms of biological role, excises uracil residues from the DNA which can arise as a result of misincorporation of dUMP residues by DNA polymerase or deamination of cytosines. Therefore may reduce deleterious uracil incorporation into the viral genome, particularly in terminally differentiated cells which lack DNA repair enzymes. The chain is Uracil-DNA glycosylase from Human herpesvirus 2 (strain HG52) (HHV-2).